A 400-amino-acid chain; its full sequence is Lysophospholipid transporter LplT (400 aa).

The next 12 membrane-spanning stretches (helical) occupy residues 19–39 (VIVAQFLSAFGDNALLFATLA), 53–73 (VLQMVFVGAYILFAPFVGQIA), 91–111 (AGAAGICLGVNPFVGYTLVGI), 139–159 (LMEASTIAAILLGSVAGGVLA), 164–184 (IAALVACALAYAGAVAANLFI), 195–213 (SWRLSAMTRSFFSACVVLW), 227–247 (LFWGAGVTLRFLLVLWVPVAL), 257–277 (YLNAMVAVGIVVGAGAAAKLV), 281–301 (TVSRCMPAGILIGVVVAIFSL), 304–324 (ALLPAYALLLLIGMLGGFFVV), 352–372 (NSAMLLMLGLYSLAVLVGVPA), and 373–393 (VAIGIGFGVLFALAIAALWIW).

Belongs to the major facilitator superfamily. LplT (TC 2.A.1.42) family.

It localises to the cell inner membrane. In terms of biological role, catalyzes the facilitated diffusion of 2-acyl-glycero-3-phosphoethanolamine (2-acyl-GPE) into the cell. The sequence is that of Lysophospholipid transporter LplT from Salmonella heidelberg (strain SL476).